A 68-amino-acid polypeptide reads, in one-letter code: Large ribosomal subunit protein bL31 (68 aa).

Residues cysteine 16, cysteine 18, cysteine 36, and cysteine 39 each coordinate Zn(2+).

Belongs to the bacterial ribosomal protein bL31 family. Type A subfamily. In terms of assembly, part of the 50S ribosomal subunit. Zn(2+) serves as cofactor.

Binds the 23S rRNA. In Lachnospira eligens (strain ATCC 27750 / DSM 3376 / VPI C15-48 / C15-B4) (Eubacterium eligens), this protein is Large ribosomal subunit protein bL31.